A 215-amino-acid polypeptide reads, in one-letter code: RNA pyrophosphohydrolase (215 aa).

The region spanning 6 to 149 is the Nudix hydrolase domain; the sequence is GFRPNVGIIL…KRDVYQLALT (144 aa). The Nudix box signature appears at 38–59; it reads GGIKYGETPMQAMYRELHEETG.

Belongs to the Nudix hydrolase family. RppH subfamily. It depends on a divalent metal cation as a cofactor.

Its function is as follows. Accelerates the degradation of transcripts by removing pyrophosphate from the 5'-end of triphosphorylated RNA, leading to a more labile monophosphorylated state that can stimulate subsequent ribonuclease cleavage. In Burkholderia vietnamiensis (strain G4 / LMG 22486) (Burkholderia cepacia (strain R1808)), this protein is RNA pyrophosphohydrolase.